The following is a 502-amino-acid chain: ATP synthase subunit alpha (502 aa).

The disordered stretch occupies residues 115–135 (VDGLGPINTTNTRPIESPAPG). 169–176 (GDRQTGKT) contacts ATP.

Belongs to the ATPase alpha/beta chains family. F-type ATPases have 2 components, CF(1) - the catalytic core - and CF(0) - the membrane proton channel. CF(1) has five subunits: alpha(3), beta(3), gamma(1), delta(1), epsilon(1). CF(0) has three main subunits: a(1), b(2) and c(9-12). The alpha and beta chains form an alternating ring which encloses part of the gamma chain. CF(1) is attached to CF(0) by a central stalk formed by the gamma and epsilon chains, while a peripheral stalk is formed by the delta and b chains.

Its subcellular location is the cell membrane. It carries out the reaction ATP + H2O + 4 H(+)(in) = ADP + phosphate + 5 H(+)(out). Produces ATP from ADP in the presence of a proton gradient across the membrane. The alpha chain is a regulatory subunit. The chain is ATP synthase subunit alpha from Bacillus mycoides (strain KBAB4) (Bacillus weihenstephanensis).